A 339-amino-acid polypeptide reads, in one-letter code: Ketol-acid reductoisomerase (NADP(+)) (339 aa).

The region spanning 1–182 (MRVYYDSDAD…GGGRAGIIET (182 aa)) is the KARI N-terminal Rossmann domain. NADP(+) is bound by residues 24–27 (YGSQ), Arg-48, Ser-51, and 83–86 (DEGQ). His-108 is a catalytic residue. An NADP(+)-binding site is contributed by Gly-134. The KARI C-terminal knotted domain maps to 183–328 (TFKEECETDL…EKLRAMMPWI (146 aa)). Mg(2+)-binding residues include Asp-191, Glu-195, Glu-227, and Glu-231. Ser-252 is a binding site for substrate.

It belongs to the ketol-acid reductoisomerase family. Requires Mg(2+) as cofactor.

The enzyme catalyses (2R)-2,3-dihydroxy-3-methylbutanoate + NADP(+) = (2S)-2-acetolactate + NADPH + H(+). It catalyses the reaction (2R,3R)-2,3-dihydroxy-3-methylpentanoate + NADP(+) = (S)-2-ethyl-2-hydroxy-3-oxobutanoate + NADPH + H(+). Its pathway is amino-acid biosynthesis; L-isoleucine biosynthesis; L-isoleucine from 2-oxobutanoate: step 2/4. It functions in the pathway amino-acid biosynthesis; L-valine biosynthesis; L-valine from pyruvate: step 2/4. Functionally, involved in the biosynthesis of branched-chain amino acids (BCAA). Catalyzes an alkyl-migration followed by a ketol-acid reduction of (S)-2-acetolactate (S2AL) to yield (R)-2,3-dihydroxy-isovalerate. In the isomerase reaction, S2AL is rearranged via a Mg-dependent methyl migration to produce 3-hydroxy-3-methyl-2-ketobutyrate (HMKB). In the reductase reaction, this 2-ketoacid undergoes a metal-dependent reduction by NADPH to yield (R)-2,3-dihydroxy-isovalerate. In Acidiphilium cryptum (strain JF-5), this protein is Ketol-acid reductoisomerase (NADP(+)).